The primary structure comprises 440 residues: Trigger factor (440 aa).

In terms of domain architecture, PPIase FKBP-type spans 161-257 (GDYVKLAYEG…VLEVRERVLP (97 aa)).

It belongs to the FKBP-type PPIase family. Tig subfamily.

It is found in the cytoplasm. The enzyme catalyses [protein]-peptidylproline (omega=180) = [protein]-peptidylproline (omega=0). Involved in protein export. Acts as a chaperone by maintaining the newly synthesized protein in an open conformation. Functions as a peptidyl-prolyl cis-trans isomerase. This Opitutus terrae (strain DSM 11246 / JCM 15787 / PB90-1) protein is Trigger factor.